Consider the following 635-residue polypeptide: Arabinoxylan arabinofuranohydrolase (635 aa).

The first 26 residues, 1–26 (MIRKCLVLFLSFALLLSVFPMLNVDA), serve as a signal peptide directing secretion. The Proton acceptor role is filled by aspartate 49. Catalysis depends on glutamate 248, which acts as the Proton donor. A substrate-binding site is contributed by asparagine 311. CBM6 domains are found at residues 379-508 (TRVE…WQFT) and 517-634 (TKVE…IEFS). Residues glutamate 382, glutamate 384, asparagine 406, leucine 407, aspartate 503, glutamate 520, glutamate 522, aspartate 539, tyrosine 544, aspartate 620, tryptophan 624, aspartate 625, and aspartate 629 each contribute to the Ca(2+) site.

The protein belongs to the glycosyl hydrolase 43 family.

The protein localises to the secreted. It catalyses the reaction Hydrolysis of terminal non-reducing alpha-L-arabinofuranoside residues in alpha-L-arabinosides.. Its pathway is glycan degradation; xylan degradation. With respect to regulation, activated by calcium and magnesium. Inhibited by copper. Its function is as follows. Cleaves arabinose units from O-2- or O-3-monosubstituted xylose residues, thereby assisting in arabinoxylan (AX) and short-chain arabinoxylo-oligosaccharide (AXOS) degradation. Preferres wheat flour xylan over oat spelt xylan as substrate. Does not display endoxylanase activity. The polypeptide is Arabinoxylan arabinofuranohydrolase (xynD) (Paenibacillus polymyxa (Bacillus polymyxa)).